Consider the following 430-residue polypeptide: 3-oxo-tetronate kinase (430 aa).

Residues Ser-268, 366-369 (GGET), and Gly-410 contribute to the ATP site.

The protein belongs to the four-carbon acid sugar kinase family.

It carries out the reaction 3-dehydro-L-erythronate + ATP = 3-dehydro-4-O-phospho-L-erythronate + ADP + H(+). It catalyses the reaction 3-dehydro-D-erythronate + ATP = 3-dehydro-4-O-phospho-D-erythronate + ADP + H(+). Functionally, catalyzes the ATP-dependent phosphorylation of 3-oxo-tetronate to 3-oxo-tetronate 4-phosphate. The protein is 3-oxo-tetronate kinase of Pseudomonas fluorescens (strain ATCC BAA-477 / NRRL B-23932 / Pf-5).